The following is a 214-amino-acid chain: Outer-membrane lipoprotein LolB (214 aa).

Positions 1 to 30 are cleaved as a signal peptide; it reads MKHVSSPHPCAAIASARVWLGLVLVALLAG. C31 carries N-palmitoyl cysteine lipidation. A lipid anchor (S-diacylglycerol cysteine) is attached at C31.

Belongs to the LolB family. As to quaternary structure, monomer.

Its subcellular location is the cell outer membrane. Plays a critical role in the incorporation of lipoproteins in the outer membrane after they are released by the LolA protein. This Chromohalobacter salexigens (strain ATCC BAA-138 / DSM 3043 / CIP 106854 / NCIMB 13768 / 1H11) protein is Outer-membrane lipoprotein LolB.